A 148-amino-acid chain; its full sequence is D-aminoacyl-tRNA deacylase (148 aa).

The Gly-cisPro motif, important for rejection of L-amino acids signature appears at 137–138 (GP).

This sequence belongs to the DTD family. In terms of assembly, homodimer.

Its subcellular location is the cytoplasm. It catalyses the reaction glycyl-tRNA(Ala) + H2O = tRNA(Ala) + glycine + H(+). The catalysed reaction is a D-aminoacyl-tRNA + H2O = a tRNA + a D-alpha-amino acid + H(+). An aminoacyl-tRNA editing enzyme that deacylates mischarged D-aminoacyl-tRNAs. Also deacylates mischarged glycyl-tRNA(Ala), protecting cells against glycine mischarging by AlaRS. Acts via tRNA-based rather than protein-based catalysis; rejects L-amino acids rather than detecting D-amino acids in the active site. By recycling D-aminoacyl-tRNA to D-amino acids and free tRNA molecules, this enzyme counteracts the toxicity associated with the formation of D-aminoacyl-tRNA entities in vivo and helps enforce protein L-homochirality. This is D-aminoacyl-tRNA deacylase from Deinococcus geothermalis (strain DSM 11300 / CIP 105573 / AG-3a).